The chain runs to 162 residues: 2-C-methyl-D-erythritol 2,4-cyclodiphosphate synthase (162 aa).

A divalent metal cation is bound by residues aspartate 12 and histidine 14. Residues 12 to 14 (DVH) and 38 to 39 (HS) each bind 4-CDP-2-C-methyl-D-erythritol 2-phosphate. Histidine 46 is an a divalent metal cation binding site. 4-CDP-2-C-methyl-D-erythritol 2-phosphate-binding positions include 60 to 62 (DIG), 65 to 69 (FPDTD), and arginine 146.

It belongs to the IspF family. In terms of assembly, homotrimer. Requires a divalent metal cation as cofactor.

It carries out the reaction 4-CDP-2-C-methyl-D-erythritol 2-phosphate = 2-C-methyl-D-erythritol 2,4-cyclic diphosphate + CMP. Its pathway is isoprenoid biosynthesis; isopentenyl diphosphate biosynthesis via DXP pathway; isopentenyl diphosphate from 1-deoxy-D-xylulose 5-phosphate: step 4/6. Its function is as follows. Involved in the biosynthesis of isopentenyl diphosphate (IPP) and dimethylallyl diphosphate (DMAPP), two major building blocks of isoprenoid compounds. Catalyzes the conversion of 4-diphosphocytidyl-2-C-methyl-D-erythritol 2-phosphate (CDP-ME2P) to 2-C-methyl-D-erythritol 2,4-cyclodiphosphate (ME-CPP) with a corresponding release of cytidine 5-monophosphate (CMP). This chain is 2-C-methyl-D-erythritol 2,4-cyclodiphosphate synthase, found in Bordetella parapertussis (strain 12822 / ATCC BAA-587 / NCTC 13253).